Reading from the N-terminus, the 375-residue chain is DNA replication and repair protein RecF (375 aa).

30 to 37 (GENAQGKT) contributes to the ATP binding site.

This sequence belongs to the RecF family.

The protein resides in the cytoplasm. Functionally, the RecF protein is involved in DNA metabolism; it is required for DNA replication and normal SOS inducibility. RecF binds preferentially to single-stranded, linear DNA. It also seems to bind ATP. The protein is DNA replication and repair protein RecF of Bacillus cereus (strain ZK / E33L).